The following is a 223-amino-acid chain: Protein Mis18-alpha (223 aa).

The disordered stretch occupies residues 1–30 (MAGTFSLEPCSTSSSCNHQGKRSESSLLEK). The span at 9 to 18 (PCSTSSSCNH) shows a compositional bias: polar residues. A compositionally biased stretch (basic and acidic residues) spans 21–30 (KRSESSLLEK). 3 positions are modified to phosphoserine: S33, S36, and S37. The Mis18 domain occupies 71 to 169 (PLVFLCTRCR…SVEAVESYTL (99 aa)). Zn(2+) is bound by residues C76, C79, C132, and C135. K153 participates in a covalent cross-link: Glycyl lysine isopeptide (Lys-Gly) (interchain with G-Cter in SUMO2). Position 223 is a phosphoserine (S223).

Belongs to the mis18 family. As to quaternary structure, homodimer, and heterodimer with OIP5/MIS18B. Identified in a complex containing MIS18A, OIP5/MIS18B, MIS18BP1, RBBP7 and RBBP4.

It is found in the nucleus. It localises to the chromosome. The protein resides in the centromere. Its function is as follows. Required for recruitment of CENPA to centromeres and normal chromosome segregation during mitosis. This Rattus norvegicus (Rat) protein is Protein Mis18-alpha (Mis18a).